Here is a 421-residue protein sequence, read N- to C-terminus: UDP-N-acetylglucosamine 1-carboxyvinyltransferase (421 aa).

Position 22–23 (22–23 (KN)) interacts with phosphoenolpyruvate. R92 serves as a coordination point for UDP-N-acetyl-alpha-D-glucosamine. The active-site Proton donor is C116. C116 bears the 2-(S-cysteinyl)pyruvic acid O-phosphothioketal mark. UDP-N-acetyl-alpha-D-glucosamine contacts are provided by residues 121-125 (RPVDQ), D308, and I330.

Belongs to the EPSP synthase family. MurA subfamily.

It localises to the cytoplasm. The catalysed reaction is phosphoenolpyruvate + UDP-N-acetyl-alpha-D-glucosamine = UDP-N-acetyl-3-O-(1-carboxyvinyl)-alpha-D-glucosamine + phosphate. The protein operates within cell wall biogenesis; peptidoglycan biosynthesis. Functionally, cell wall formation. Adds enolpyruvyl to UDP-N-acetylglucosamine. This chain is UDP-N-acetylglucosamine 1-carboxyvinyltransferase, found in Ralstonia nicotianae (strain ATCC BAA-1114 / GMI1000) (Ralstonia solanacearum).